Consider the following 210-residue polypeptide: Outer-membrane lipoprotein carrier protein (210 aa).

The first 23 residues, 1–23 (MKKRIQKTILTVLFSSLSSIAFA), serve as a signal peptide directing secretion.

Belongs to the LolA family. In terms of assembly, monomer.

It is found in the periplasm. Functionally, participates in the translocation of lipoproteins from the inner membrane to the outer membrane. Only forms a complex with a lipoprotein if the residue after the N-terminal Cys is not an aspartate (The Asp acts as a targeting signal to indicate that the lipoprotein should stay in the inner membrane). In Haemophilus ducreyi (strain 35000HP / ATCC 700724), this protein is Outer-membrane lipoprotein carrier protein.